We begin with the raw amino-acid sequence, 251 residues long: Mlc titration factor A (251 aa).

4 residues coordinate Zn(2+): histidine 111, histidine 148, histidine 152, and glutamate 211.

It belongs to the MtfA family. In terms of assembly, interacts with Mlc. It depends on Zn(2+) as a cofactor.

Its subcellular location is the cytoplasm. Involved in the modulation of the activity of the glucose-phosphotransferase system (glucose-PTS). Interacts with the transcriptional repressor Mlc, preventing its interaction with DNA and leading to the modulation of expression of genes regulated by Mlc, including ptsG, which encodes the PTS system glucose-specific EIICB component. Its function is as follows. Shows zinc-dependent metallopeptidase activity. The chain is Mlc titration factor A from Salmonella arizonae (strain ATCC BAA-731 / CDC346-86 / RSK2980).